A 72-amino-acid polypeptide reads, in one-letter code: Aurein-2.5 (72 aa).

Residues 1–22 form the signal peptide; the sequence is MAFLKKSLFLVLFLGLVSLSIC. A propeptide spanning residues 23 to 49 is cleaved from the precursor; sequence EKEKRQNEEDEDENEAANHEEGSEEKR. The interval 27–47 is disordered; that stretch reads RQNEEDEDENEAANHEEGSEE. Basic and acidic residues predominate over residues 38–47; the sequence is AANHEEGSEE. Leu-65 is modified (leucine amide). A propeptide spanning residues 69-72 is cleaved from the precursor; it reads NDLE.

The protein belongs to the frog skin active peptide (FSAP) family. Aurein subfamily. May be monomeric or may oligomerize as homodimers or homotrimers in Gram-positive and Gram-negative bacteria mimetic membranes. Post-translationally, C-terminal amidation enhances antibacterial activity. This increase may be due to stabilization of the alpha-helical structure at the membrane interface. Expressed by the skin dorsal glands.

Its subcellular location is the secreted. It is found in the target cell membrane. Its function is as follows. Amphipathic alpha-helical antimicrobial peptide with moderate to potent activity against Gram-positive bacteria, Gram-negative bacteria and fungi. Also shows a weak activity against biofilm of both Gram-positive and Gram-negative bacteria. Probably acts by disturbing membrane functions with its amphipathic structure. Kills fungi via membranolytic action. Enhanced sterol levels in lipid composition membranes reduce interaction of this peptide with membranes, having a protective effect against the lytic ability of the peptide. Shows anticancer activity. The sequence is that of Aurein-2.5 from Ranoidea aurea (Green and golden bell frog).